We begin with the raw amino-acid sequence, 292 residues long: tRNA (guanine-N(7)-)-methyltransferase (292 aa).

The interval 1-54 is disordered; it reads MLKRDQSEMDIEAETANMGKEEKESFVHKRQKYRQEQEEKRLAAKKGVSFEQPE. Basic and acidic residues predominate over residues 19-42; that stretch reads GKEEKESFVHKRQKYRQEQEEKRL. S-adenosyl-L-methionine-binding positions include Gly110, 133-134, 168-169, and Cys188; these read EI and NA. Asp191 is an active-site residue. Position 266–268 (266–268) interacts with S-adenosyl-L-methionine; that stretch reads TEE.

The protein belongs to the class I-like SAM-binding methyltransferase superfamily. TrmB family. In terms of assembly, forms a complex with TRM82.

The protein resides in the nucleus. The catalysed reaction is guanosine(46) in tRNA + S-adenosyl-L-methionine = N(7)-methylguanosine(46) in tRNA + S-adenosyl-L-homocysteine. The protein operates within tRNA modification; N(7)-methylguanine-tRNA biosynthesis. In terms of biological role, catalyzes the formation of N(7)-methylguanine at position 46 (m7G46) in tRNA. This is tRNA (guanine-N(7)-)-methyltransferase from Yarrowia lipolytica (strain CLIB 122 / E 150) (Yeast).